A 258-amino-acid chain; its full sequence is Isoprenyl transferase 2 (258 aa).

Asp35 is a catalytic residue. Asp35 contributes to the Mg(2+) binding site. Residues 36–39, Trp40, Arg50, and 81–83 contribute to the substrate site; these read GNRR and SDD. The Proton acceptor role is filled by Asn84. Substrate is bound by residues Arg87, Arg207, and 213 to 215; that span reads RLS. Mg(2+) is bound at residue Glu226.

This sequence belongs to the UPP synthase family. As to quaternary structure, homodimer. Mg(2+) is required as a cofactor.

In terms of biological role, catalyzes the condensation of isopentenyl diphosphate (IPP) with allylic pyrophosphates generating different type of terpenoids. The sequence is that of Isoprenyl transferase 2 from Streptomyces coelicolor (strain ATCC BAA-471 / A3(2) / M145).